The chain runs to 196 residues: Ribonuclease H (196 aa).

The RNase H type-1 domain occupies 58 to 196 (LAKEEIIWES…GEIKADYGRK (139 aa)). The Mg(2+) site is built by Asp71, Glu109, Asp132, and Asp192.

Belongs to the RNase H family. Requires Mn(2+) as cofactor. Mg(2+) serves as cofactor.

It is found in the cytoplasm. The enzyme catalyses Endonucleolytic cleavage to 5'-phosphomonoester.. Endonuclease that specifically degrades the RNA of RNA-DNA hybrids. In Halalkalibacterium halodurans (strain ATCC BAA-125 / DSM 18197 / FERM 7344 / JCM 9153 / C-125) (Bacillus halodurans), this protein is Ribonuclease H (rnhA).